We begin with the raw amino-acid sequence, 185 residues long: Elongation factor P (185 aa).

The protein belongs to the elongation factor P family.

It is found in the cytoplasm. It functions in the pathway protein biosynthesis; polypeptide chain elongation. In terms of biological role, involved in peptide bond synthesis. Stimulates efficient translation and peptide-bond synthesis on native or reconstituted 70S ribosomes in vitro. Probably functions indirectly by altering the affinity of the ribosome for aminoacyl-tRNA, thus increasing their reactivity as acceptors for peptidyl transferase. This Clostridium tetani (strain Massachusetts / E88) protein is Elongation factor P.